A 110-amino-acid polypeptide reads, in one-letter code: Putative UPF0377 protein YIR040C (110 aa).

The protein belongs to the UPF0377 family.

The protein is Putative UPF0377 protein YIR040C of Saccharomyces cerevisiae (strain ATCC 204508 / S288c) (Baker's yeast).